The sequence spans 84 residues: U4-theraphotoxin-Hhn1a (84 aa).

Residues 1–22 (MKVTLIAILTCAAVLVLHTTAA) form the signal peptide. The propeptide occupies 23-47 (EELEESQLMEVGMPDTELAAVDEER). 3 disulfide bridges follow: Cys-51-Cys-65, Cys-55-Cys-76, and Cys-70-Cys-81.

Belongs to the neurotoxin 12 (Hwtx-2) family. 02 (Hwtx-2) subfamily. Expressed by the venom gland.

The protein localises to the secreted. Functionally, postsynaptic neurotoxin. In Cyriopagopus hainanus (Chinese bird spider), this protein is U4-theraphotoxin-Hhn1a.